A 520-amino-acid chain; its full sequence is MQSLYNSKYAHIFKGPVAKHVTYKFHDLEVTYANIPHLDITVENITPDMIYKSAHLTCSSLFRMYGLSPETDGKLWVLLYRLFTVNEGSYDHRNTIGLELYINHLTAMYEELKVKSELLACVNFALGLGYFYMSYFVMYNHKKGNLLNYLHELCHVIHRYIDQIRLLHMRNPNNYKIEEFMRILRDVFKHYRISQFYDHVMYNHIFGLTRIVSNILCGCSSVCKEHYSIKDRDKSVRGIKTRVKPASAGQSPVLSIPVGFYVNQAISIKTRFPTTGPELFGQAENVIGILRSPVLYHVSQDDVAKIEMCLKTDFYMTEFYNNKEANNYIIPIQSPGCREQEEMMLKLFNNVVFCMYLACQVRQVILSQWKILLTLFRNQFLKIVSLMKGDSFIKICIERLADDIQHHRQSLGAVFKAFLTILPDVLKHVGFPVNDSNALRAHLLVEYLVDDKFAPEIPYDTYVRMARDYRLEILRGNRMPFPIFTLDLAETRNLIFSNEAFHAFYNVISYDDIIPNYSSF.

Belongs to the herpesviridae U4 family.

The chain is Protein U4 from Elephantid herpesvirus 1 (isolate Asian elephant/Berlin/Kiba/1998) (EIHV-1).